Consider the following 213-residue polypeptide: 3-hexulose-6-phosphate synthase 2 (213 aa).

The protein belongs to the HPS/KGPDC family. HPS subfamily.

The catalysed reaction is D-ribulose 5-phosphate + formaldehyde = D-arabino-hex-3-ulose 6-phosphate. It participates in one-carbon metabolism; formaldehyde assimilation via RuMP pathway; D-fructose 6-phosphate from D-ribulose 5-phosphate and formaldehyde: step 1/2. In terms of biological role, catalyzes the condensation of ribulose 5-phosphate with formaldehyde to form 3-hexulose 6-phosphate. In Staphylococcus saprophyticus subsp. saprophyticus (strain ATCC 15305 / DSM 20229 / NCIMB 8711 / NCTC 7292 / S-41), this protein is 3-hexulose-6-phosphate synthase 2.